The sequence spans 604 residues: Replication protein A 70 kDa DNA-binding subunit B (604 aa).

The OB DNA-binding region spans 170-256 (WTIKVRVTNK…QNDYEMTLNE (87 aa)). Residues 468-488 (CKTCNKKVTEAMDSGYWCESC) form a C4-type zinc finger.

This sequence belongs to the replication factor A protein 1 family. As to quaternary structure, heterotrimer of RPA1, RPA2 and RPA3 (canonical replication protein A complex).

The protein localises to the nucleus. Component of the replication protein A complex (RPA) required for DNA recombination, repair and replication. The activity of RPA is mediated by single-stranded DNA binding and protein interactions. Probably involved in repair of double-strand DNA breaks (DSBs) induced by genotoxic stresses. This Arabidopsis thaliana (Mouse-ear cress) protein is Replication protein A 70 kDa DNA-binding subunit B (RPA1B).